The sequence spans 467 residues: Fumarate hydratase class II (467 aa).

Residues 98 to 100 (SGT), R126, 129 to 132 (HPND), 139 to 141 (SSN), and T187 contribute to the substrate site. The active-site Proton donor/acceptor is H188. Residue S318 is part of the active site. Residues S319 and 324–326 (KVN) each bind substrate.

It belongs to the class-II fumarase/aspartase family. Fumarase subfamily. Homotetramer.

It localises to the cytoplasm. It catalyses the reaction (S)-malate = fumarate + H2O. Its pathway is carbohydrate metabolism; tricarboxylic acid cycle; (S)-malate from fumarate: step 1/1. Inhibited by ATP, citrate and S-2,3-dicarboxyaziridine. Its function is as follows. Involved in the TCA cycle. FumC seems to be a backup enzyme for FumA under conditions of iron limitation and oxidative stress. Catalyzes the stereospecific interconversion of fumarate to L-malate. In Escherichia coli (strain K12), this protein is Fumarate hydratase class II.